Here is a 38-residue protein sequence, read N- to C-terminus: Photosystem II reaction center protein L (38 aa).

The helical transmembrane segment at 17–37 threads the bilayer; it reads SLFLGRLLIFVLGILFSSYIF.

It belongs to the PsbL family. As to quaternary structure, PSII is composed of 1 copy each of membrane proteins PsbA, PsbB, PsbC, PsbD, PsbE, PsbF, PsbH, PsbI, PsbJ, PsbK, PsbL, PsbM, PsbT, PsbX, PsbY, PsbZ, Psb30/Ycf12, peripheral proteins PsbO, CyanoQ (PsbQ), PsbU, PsbV and a large number of cofactors. It forms dimeric complexes.

It is found in the cellular thylakoid membrane. Functionally, one of the components of the core complex of photosystem II (PSII). PSII is a light-driven water:plastoquinone oxidoreductase that uses light energy to abstract electrons from H(2)O, generating O(2) and a proton gradient subsequently used for ATP formation. It consists of a core antenna complex that captures photons, and an electron transfer chain that converts photonic excitation into a charge separation. This subunit is found at the monomer-monomer interface and is required for correct PSII assembly and/or dimerization. The chain is Photosystem II reaction center protein L from Prochlorothrix hollandica.